The following is a 400-amino-acid chain: Tryptophan synthase beta chain (400 aa).

Lys92 carries the post-translational modification N6-(pyridoxal phosphate)lysine.

The protein belongs to the TrpB family. As to quaternary structure, tetramer of two alpha and two beta chains. Pyridoxal 5'-phosphate is required as a cofactor.

It catalyses the reaction (1S,2R)-1-C-(indol-3-yl)glycerol 3-phosphate + L-serine = D-glyceraldehyde 3-phosphate + L-tryptophan + H2O. Its pathway is amino-acid biosynthesis; L-tryptophan biosynthesis; L-tryptophan from chorismate: step 5/5. The beta subunit is responsible for the synthesis of L-tryptophan from indole and L-serine. The chain is Tryptophan synthase beta chain from Chromobacterium violaceum (strain ATCC 12472 / DSM 30191 / JCM 1249 / CCUG 213 / NBRC 12614 / NCIMB 9131 / NCTC 9757 / MK).